Here is a 131-residue protein sequence, read N- to C-terminus: Small ribosomal subunit protein eS8 (131 aa).

A disordered region spans residues 15 to 36; the sequence is PSGGKKGRVRKTKKKALGGGPP. Positions 17-30 are enriched in basic residues; it reads GGKKGRVRKTKKKA.

Belongs to the eukaryotic ribosomal protein eS8 family. In terms of assembly, part of the 30S ribosomal subunit.

This chain is Small ribosomal subunit protein eS8, found in Pyrobaculum calidifontis (strain DSM 21063 / JCM 11548 / VA1).